We begin with the raw amino-acid sequence, 389 residues long: Chaperone protein DnaJ (389 aa).

The J domain maps to 6 to 70; the sequence is DYYEVLGLAK…QKKAAYDQYG (65 aa). Residues 142–224 form a CR-type zinc finger; that stretch reads GVEKEIKYNR…CHGTGHEKKA (83 aa). Zn(2+) contacts are provided by C155, C158, C172, C175, C198, C201, C212, and C215. CXXCXGXG motif repeat units lie at residues 155 to 162, 172 to 179, 198 to 205, and 212 to 219; these read CATCGGNG, CHKCHGSG, CDVCHGTG, and CPTCHGTG.

Belongs to the DnaJ family. As to quaternary structure, homodimer. It depends on Zn(2+) as a cofactor.

The protein resides in the cytoplasm. Its function is as follows. Participates actively in the response to hyperosmotic and heat shock by preventing the aggregation of stress-denatured proteins and by disaggregating proteins, also in an autonomous, DnaK-independent fashion. Unfolded proteins bind initially to DnaJ; upon interaction with the DnaJ-bound protein, DnaK hydrolyzes its bound ATP, resulting in the formation of a stable complex. GrpE releases ADP from DnaK; ATP binding to DnaK triggers the release of the substrate protein, thus completing the reaction cycle. Several rounds of ATP-dependent interactions between DnaJ, DnaK and GrpE are required for fully efficient folding. Also involved, together with DnaK and GrpE, in the DNA replication of plasmids through activation of initiation proteins. The chain is Chaperone protein DnaJ from Enterococcus faecalis (strain ATCC 700802 / V583).